Here is a 458-residue protein sequence, read N- to C-terminus: tRNA modification GTPase MnmE (458 aa).

Positions 22, 84, and 123 each coordinate (6S)-5-formyl-5,6,7,8-tetrahydrofolate. Positions 220–379 (GIATAIIGRP…LEKAIADLFF (160 aa)) constitute a TrmE-type G domain. K(+) is bound at residue Asn230. Residues 230 to 235 (NVGKSS), 249 to 255 (TDIAGTT), and 274 to 277 (DTAG) each bind GTP. Position 234 (Ser234) interacts with Mg(2+). K(+) is bound by residues Thr249, Ile251, and Thr254. A Mg(2+)-binding site is contributed by Thr255. Residue Lys458 participates in (6S)-5-formyl-5,6,7,8-tetrahydrofolate binding.

The protein belongs to the TRAFAC class TrmE-Era-EngA-EngB-Septin-like GTPase superfamily. TrmE GTPase family. Homodimer. Heterotetramer of two MnmE and two MnmG subunits. K(+) serves as cofactor.

It localises to the cytoplasm. In terms of biological role, exhibits a very high intrinsic GTPase hydrolysis rate. Involved in the addition of a carboxymethylaminomethyl (cmnm) group at the wobble position (U34) of certain tRNAs, forming tRNA-cmnm(5)s(2)U34. The chain is tRNA modification GTPase MnmE from Bacillus cereus (strain ZK / E33L).